The following is a 317-amino-acid chain: Probable porphobilinogen deaminase (317 aa).

Cys-234 bears the S-(dipyrrolylmethanemethyl)cysteine mark.

The protein belongs to the HMBS family. The cofactor is dipyrromethane.

The catalysed reaction is 4 porphobilinogen + H2O = hydroxymethylbilane + 4 NH4(+). The protein operates within porphyrin-containing compound metabolism; protoporphyrin-IX biosynthesis; coproporphyrinogen-III from 5-aminolevulinate: step 2/4. Tetrapolymerization of the monopyrrole PBG into the hydroxymethylbilane pre-uroporphyrinogen in several discrete steps. The polypeptide is Probable porphobilinogen deaminase (Methanosarcina acetivorans (strain ATCC 35395 / DSM 2834 / JCM 12185 / C2A)).